Reading from the N-terminus, the 230-residue chain is Ureidoacrylate amidohydrolase RutB (230 aa).

Asp24 functions as the Proton acceptor in the catalytic mechanism. Lys133 is an active-site residue. Cys166 (nucleophile) is an active-site residue.

The protein belongs to the isochorismatase family. RutB subfamily.

It catalyses the reaction (Z)-3-ureidoacrylate + H2O + H(+) = (Z)-3-aminoacrylate + NH4(+) + CO2. The enzyme catalyses (Z)-3-ureidoacrylate + H2O = (Z)-3-aminoacrylate + carbamate + H(+). It carries out the reaction (Z)-2-methylureidoacrylate + H2O + H(+) = (Z)-2-methylaminoacrylate + NH4(+) + CO2. Functionally, hydrolyzes ureidoacrylate to form aminoacrylate and carbamate. The carbamate hydrolyzes spontaneously, thereby releasing one of the nitrogen atoms of the pyrimidine ring as ammonia and one of its carbon atoms as CO2. The sequence is that of Ureidoacrylate amidohydrolase RutB from Escherichia coli O7:K1 (strain IAI39 / ExPEC).